Reading from the N-terminus, the 159-residue chain is Ribosomal RNA large subunit methyltransferase H (159 aa).

Residues Leu76 and Gly108 each contribute to the S-adenosyl-L-methionine site.

The protein belongs to the RNA methyltransferase RlmH family. Homodimer.

The protein localises to the cytoplasm. It catalyses the reaction pseudouridine(1915) in 23S rRNA + S-adenosyl-L-methionine = N(3)-methylpseudouridine(1915) in 23S rRNA + S-adenosyl-L-homocysteine + H(+). Specifically methylates the pseudouridine at position 1915 (m3Psi1915) in 23S rRNA. The polypeptide is Ribosomal RNA large subunit methyltransferase H (Finegoldia magna (strain ATCC 29328 / DSM 20472 / WAL 2508) (Peptostreptococcus magnus)).